The chain runs to 129 residues: Transcriptional activator protein (129 aa).

Residues 1–12 (MRSSSPSQPPSI) are compositionally biased toward low complexity. The segment at 1-21 (MRSSSPSQPPSIKKAHRQAKR) is disordered. A Nuclear localization signal motif is present at residues 13–28 (KKAHRQAKRRAIRRRR). The segment at 33 to 50 (CGCSIYFHIDCTGHGFTH) is a zinc-finger region. Residues 84-114 (IHQNEDIPCTNTVQPQPEESVASPQSLPELP) are disordered. Positions 92-109 (CTNTVQPQPEESVASPQS) are enriched in polar residues. The segment at 115-129 (SLDDFDDSFWVNLFK) is transactivation.

This sequence belongs to the geminiviridae transcriptional activator protein family. Monomer. Homodimer. Homooligomer. Self-interaction correlates with nuclear localization and efficient activation of transcription. Monomers suppress local silencing by interacting with and inactivating host adenosine kinase 2 (ADK2) in the cytoplasm. Interacts with and inhibits host SNF1 kinase. Binds to ssDNA. In terms of processing, phosphorylated.

It localises to the host nucleus. It is found in the host cytoplasm. In terms of biological role, strong activator of the late viral genes promoters. Enhances the expression of the capsid protein and nuclear shuttle protein. Acts as a suppressor of RNA-mediated gene silencing, also known as post-transcriptional gene silencing (PTGS), a mechanism of plant viral defense that limits the accumulation of viral RNAs. Suppresses the host RNA silencing by inhibiting adenosine kinase 2 (ADK2), a kinase involved in a general methylation pathway. Also suppresses the host basal defense by interacting with and inhibiting SNF1 kinase, a key regulator of cell metabolism implicated in innate antiviral defense. Determines pathogenicity. In Abutilon (Upland cotton), this protein is Transcriptional activator protein.